The sequence spans 247 residues: Proteasome subunit alpha (247 aa).

This sequence belongs to the peptidase T1A family. As to quaternary structure, the 20S proteasome core is composed of 14 alpha and 14 beta subunits that assemble into four stacked heptameric rings, resulting in a barrel-shaped structure. The two inner rings, each composed of seven catalytic beta subunits, are sandwiched by two outer rings, each composed of seven alpha subunits. The catalytic chamber with the active sites is on the inside of the barrel. Has a gated structure, the ends of the cylinder being occluded by the N-termini of the alpha-subunits. Is capped at one or both ends by the proteasome regulatory ATPase, PAN.

It localises to the cytoplasm. With respect to regulation, the formation of the proteasomal ATPase PAN-20S proteasome complex, via the docking of the C-termini of PAN into the intersubunit pockets in the alpha-rings, triggers opening of the gate for substrate entry. Interconversion between the open-gate and close-gate conformations leads to a dynamic regulation of the 20S proteasome proteolysis activity. In terms of biological role, component of the proteasome core, a large protease complex with broad specificity involved in protein degradation. This is Proteasome subunit alpha from Methanosarcina thermophila.